The chain runs to 734 residues: MALRFPRFSQGLAQDPTTRRIWFGIATAHDFESHDDITEERLYQNIFASHFGQLAIIFLWTSGNLFHVAWQGNFESWVKDPLHVRPIAHAIWDPHFGQPAVEAFTRGGAFGPVNISYSGVYQWWYTIGLRTNEDLYTGALFLLFLSAISLVAGWLHLQPKWKPSVSWFKNAESRLNHHLSGLFGVSSLAWTGHLVHVAIPGSRGEYVRWNNFLDVLPYPQGLTPLFTGQWNLYAQNPDSGSHLFGTSQGSGTAILTLLGGFHPQTQSLWLTDIAHHHLAIAFIFLVAGHMYRTNFGIGHSMKDLLEAHTPPGGRLGRGHKGLYDTINNSLHFQLGLALASLGVITSLVAQHMYSLPAYAFIAQDFTSQAALYTHHQYIAGFIMTGAFAHGAIFFIRDYNPEQNEDNVLARMLDHKEAIISHLSWASLFLGFHTLGLYVHNDVMLAFGTPEKQILIEPIFAQWIQSAHGKTSYGFDILLSSTNGPAFNAGRSIWLPGWLSAVNDNSNSLFLTIGPGDFLVHHAIALGLHTTTLILVKGALDARGSKLMPDKKDFGYSFPCDGPGRGGTCDISAWDAFYLAVFWMLNTIGWVTFYWHWKHITLWQGNVSQFNESSTYLMGWLRDYLWLNSSQLINGYNPFGMNSLSVWAWMFLFGHLVWATGFMFLISWRGYWQELIETLAWAHERTPLANLIRWRDKPVALSIVQARLVGLAHFSVGYIFTYAAFLIASTSGKFG.

8 consecutive transmembrane segments (helical) span residues 46–69 (IFAS…FHVA), 135–158 (LYTG…LHLQ), 175–199 (LNHH…HVAI), 273–291 (IAHH…GHMY), 330–353 (LHFQ…QHMY), 369–395 (AALY…IFFI), 417–439 (AIIS…LYVH), and 517–535 (FLVH…LILV). [4Fe-4S] cluster is bound by residues Cys-559 and Cys-568. 2 helical membrane passes run 575 to 596 (AFYL…YWHW) and 643 to 665 (LSVW…MFLI). Positions 654, 662, and 670 each coordinate chlorophyll a. Trp-671 serves as a coordination point for phylloquinone. A helical transmembrane segment spans residues 707–727 (LVGLAHFSVGYIFTYAAFLIA).

It belongs to the PsaA/PsaB family. As to quaternary structure, the PsaA/B heterodimer binds the P700 chlorophyll special pair and subsequent electron acceptors. PSI consists of a core antenna complex that captures photons, and an electron transfer chain that converts photonic excitation into a charge separation. The eukaryotic PSI reaction center is composed of at least 11 subunits. P700 is a chlorophyll a/chlorophyll a' dimer, A0 is one or more chlorophyll a, A1 is one or both phylloquinones and FX is a shared 4Fe-4S iron-sulfur center. serves as cofactor.

It localises to the plastid. The protein resides in the chloroplast thylakoid membrane. The catalysed reaction is reduced [plastocyanin] + hnu + oxidized [2Fe-2S]-[ferredoxin] = oxidized [plastocyanin] + reduced [2Fe-2S]-[ferredoxin]. Functionally, psaA and PsaB bind P700, the primary electron donor of photosystem I (PSI), as well as the electron acceptors A0, A1 and FX. PSI is a plastocyanin-ferredoxin oxidoreductase, converting photonic excitation into a charge separation, which transfers an electron from the donor P700 chlorophyll pair to the spectroscopically characterized acceptors A0, A1, FX, FA and FB in turn. Oxidized P700 is reduced on the lumenal side of the thylakoid membrane by plastocyanin. In Piper cenocladum (Ant piper), this protein is Photosystem I P700 chlorophyll a apoprotein A2.